Here is a 642-residue protein sequence, read N- to C-terminus: ATP-dependent rRNA helicase spb4 (642 aa).

Positions 14–42 match the Q motif motif; sequence WDGVTPALSEWVLDAVASMGFTRMTPVQA. One can recognise a Helicase ATP-binding domain in the interval 45-250; the sequence is IPLFMAHKDV…RVGLRNPVKV (206 aa). Residue 58–65 participates in ATP binding; the sequence is AVTGSGKT. Residues 198-201 carry the DEAD box motif; that stretch reads DEAD. The region spanning 284–438 is the Helicase C-terminal domain; that stretch reads AIKHILYSLE…TLTITDADAA (155 aa). Residues 522–625 adopt a coiled-coil conformation; it reads AYKDKQREKR…RLLRRAAKDK (104 aa). Basic and acidic residues-rich tracts occupy residues 527–536 and 577–628; these read QREKRRKEQV and AKQA…KESK. Residues 527–642 are disordered; sequence QREKRRKEQV…DDDDEFKGFD (116 aa). The segment covering 632-642 has biased composition (acidic residues); sequence GDDDDEFKGFD.

This sequence belongs to the DEAD box helicase family. DDX55/SPB4 subfamily. As to quaternary structure, component of pre-60S ribosomal complexes.

It is found in the nucleus. Its subcellular location is the nucleolus. The enzyme catalyses ATP + H2O = ADP + phosphate + H(+). Its function is as follows. ATP-binding RNA helicase involved in the biogenesis of 60S ribosomal subunits. Binds 90S pre-ribosomal particles and dissociates from pre-60S ribosomal particles after processing of 27SB pre-rRNA. Required for the normal formation of 18S rRNA through the processing of pre-rRNAs at sites A0, A1 and A2, and the normal formation of 25S and 5.8S rRNAs through the processing of pre-rRNAs at sites C1 and C2. The sequence is that of ATP-dependent rRNA helicase spb4 from Aspergillus niger (strain ATCC MYA-4892 / CBS 513.88 / FGSC A1513).